We begin with the raw amino-acid sequence, 583 residues long: Phosphoglucomutase, cytoplasmic 1 (583 aa).

Alpha-D-glucose 1,6-bisphosphate-binding residues include R25 and S124. S124 serves as the catalytic Phosphoserine intermediate. Residues S124, D300, D302, and D304 each coordinate Mg(2+). At S124 the chain carries Phosphoserine. The alpha-D-glucose 1,6-bisphosphate site is built by D304, R305, T368, E387, S389, and K400.

It belongs to the phosphohexose mutase family. As to quaternary structure, monomer. Mg(2+) is required as a cofactor. Autophosphorylated. As to expression, mostly expressed in roots and coleoptiles, and, to a lower extent, in leaves, pollen and developing seeds.

The protein resides in the cytoplasm. It carries out the reaction alpha-D-glucose 1-phosphate = alpha-D-glucose 6-phosphate. The enzyme catalyses O-phospho-L-seryl-[protein] + alpha-D-glucose 1-phosphate = alpha-D-glucose 1,6-bisphosphate + L-seryl-[protein]. The catalysed reaction is alpha-D-glucose 1,6-bisphosphate + L-seryl-[protein] = O-phospho-L-seryl-[protein] + alpha-D-glucose 6-phosphate. In terms of biological role, catalyzes the reversible isomerization of alpha-D-glucose 1-phosphate to alpha-D-glucose 6-phosphate. The mechanism proceeds via the intermediate compound alpha-D-glucose 1,6-bisphosphate. This enzyme participates in both the breakdown and synthesis of glucose. This Zea mays (Maize) protein is Phosphoglucomutase, cytoplasmic 1.